The sequence spans 118 residues: Putative pterin-4-alpha-carbinolamine dehydratase (118 aa).

This sequence belongs to the pterin-4-alpha-carbinolamine dehydratase family.

The enzyme catalyses (4aS,6R)-4a-hydroxy-L-erythro-5,6,7,8-tetrahydrobiopterin = (6R)-L-erythro-6,7-dihydrobiopterin + H2O. This chain is Putative pterin-4-alpha-carbinolamine dehydratase, found in Xanthomonas campestris pv. campestris (strain 8004).